The primary structure comprises 629 residues: Hemocyanin G chain (629 aa).

Residues His-171, His-175, His-202, His-322, His-326, and His-362 each coordinate Cu cation. Residues Asn-447 and Asn-506 are each glycosylated (N-linked (GlcNAc...) asparagine). A disulfide bond links Cys-534 and Cys-582. Asn-615 carries N-linked (GlcNAc...) asparagine glycosylation.

It belongs to the tyrosinase family. Hemocyanin subfamily. In terms of assembly, tarantula hemocyanin is a 24-chain polymer with seven different chains identified. As to expression, hemolymph.

The protein resides in the secreted. The protein localises to the extracellular space. In terms of biological role, hemocyanins are copper-containing oxygen carriers occurring freely dissolved in the hemolymph of many mollusks and arthropods. The polypeptide is Hemocyanin G chain (HCG) (Aphonopelma sp. (American tarantula)).